Consider the following 475-residue polypeptide: Ribulose bisphosphate carboxylase large chain (475 aa).

A propeptide spanning residues 1-2 (MS) is cleaved from the precursor. P3 carries the N-acetylproline modification. The residue at position 14 (K14) is an N6,N6,N6-trimethyllysine. The substrate site is built by N123 and T173. The Proton acceptor role is filled by K175. Residue K177 coordinates substrate. Positions 201, 203, and 204 each coordinate Mg(2+). K201 bears the N6-carboxylysine mark. The active-site Proton acceptor is H294. Substrate-binding residues include R295, H327, and S379.

The protein belongs to the RuBisCO large chain family. Type I subfamily. In terms of assembly, heterohexadecamer of 8 large chains and 8 small chains; disulfide-linked. The disulfide link is formed within the large subunit homodimers. The cofactor is Mg(2+). The disulfide bond which can form in the large chain dimeric partners within the hexadecamer appears to be associated with oxidative stress and protein turnover.

The protein localises to the plastid. Its subcellular location is the chloroplast. It catalyses the reaction 2 (2R)-3-phosphoglycerate + 2 H(+) = D-ribulose 1,5-bisphosphate + CO2 + H2O. It carries out the reaction D-ribulose 1,5-bisphosphate + O2 = 2-phosphoglycolate + (2R)-3-phosphoglycerate + 2 H(+). Its function is as follows. RuBisCO catalyzes two reactions: the carboxylation of D-ribulose 1,5-bisphosphate, the primary event in carbon dioxide fixation, as well as the oxidative fragmentation of the pentose substrate in the photorespiration process. Both reactions occur simultaneously and in competition at the same active site. This chain is Ribulose bisphosphate carboxylase large chain, found in Pinus balfouriana (Foxtail pine).